The following is a 281-amino-acid chain: CCAAT/enhancer-binding protein epsilon (281 aa).

The tract at residues 1–30 (MSHGTYYECEPRGGQQPLEFSGGRAGPGEL) is disordered. Lys121 is covalently cross-linked (Glycyl lysine isopeptide (Lys-Gly) (interchain with G-Cter in SUMO2)). Ser181 carries the phosphoserine modification. Residues 204–267 (SLEYRLRRER…DTLRNLFRQI (64 aa)) form the bZIP domain. The basic motif stretch occupies residues 208–245 (RLRRERNNIAVRKSRDKAKRRIMETQQKVLEYMAENER). Residues 246–267 (LRNRVDQLTQELDTLRNLFRQI) form a leucine-zipper region.

Belongs to the bZIP family. C/EBP subfamily. As to quaternary structure, binds DNA as a homodimer and as a heterodimer. Can form stable heterodimers with CEBPA, CEBPB and CEBPD. Interacts with GATA1 and SPI1. Interacts with SMARCD2. Phosphorylated.

The protein resides in the nucleus. Transcriptional activator. C/EBP are DNA-binding proteins that recognize two different motifs: the CCAAT homology common to many promoters and the enhanced core homology common to many enhancers. Required for the promyelocyte-myelocyte transition in myeloid differentiation. In Mus musculus (Mouse), this protein is CCAAT/enhancer-binding protein epsilon (Cebpe).